The following is a 334-amino-acid chain: MKTYYTSLKKFHTFKINVFAKKIIIVKTIKTLIKTWKKCNQENLPFLLLGKGSNVLFTKNYNGFVVVNRISGITIHEQKDYWLLHVKGGTKWNNLVKYTIQKKIYGLENLALIPGTVGAAPIQNIGAYGVEFKDVCQYVDVLYLNNSKIVRINSNNCLFGYRDSIFKKKHNPNSIILSVGIKLPKTWKPKISHLELQKLSFKNITSHQIFHYICKLRKKKLPNPKKIGNAGSFFKNPIIKKNKAHKIICEYKDLPFYPEPHGMIKLSAGWLIEKCKLKNFSVGNAKIYHKQALILINKNNLATSKNIIKLAKIIISKVKKKFDITLELEVQIIN.

Residues 16-186 (INVFAKKIII…LSVGIKLPKT (171 aa)) form the FAD-binding PCMH-type domain. The active site involves arginine 162. The Proton donor role is filled by serine 232. Glutamate 329 is a catalytic residue.

The protein belongs to the MurB family. The cofactor is FAD.

The protein resides in the cytoplasm. It catalyses the reaction UDP-N-acetyl-alpha-D-muramate + NADP(+) = UDP-N-acetyl-3-O-(1-carboxyvinyl)-alpha-D-glucosamine + NADPH + H(+). It functions in the pathway cell wall biogenesis; peptidoglycan biosynthesis. In terms of biological role, cell wall formation. In Buchnera aphidicola subsp. Baizongia pistaciae (strain Bp), this protein is UDP-N-acetylenolpyruvoylglucosamine reductase.